Here is a 128-residue protein sequence, read N- to C-terminus: Small ribosomal subunit protein bS6 (128 aa).

Belongs to the bacterial ribosomal protein bS6 family.

Its function is as follows. Binds together with bS18 to 16S ribosomal RNA. This chain is Small ribosomal subunit protein bS6, found in Nitratiruptor sp. (strain SB155-2).